Here is a 175-residue protein sequence, read N- to C-terminus: MVIDRAGYRLNVGIILVNDSDRVFWGRRSGHDAWQFPQGGLAPGETAMQAMYRELHEEVGLDKGDVEILGSTRRWLKYRLPKQYLRHGSEPLVIGQKQKWYLLKLVTSEQKVRLDLSDSPEFDSWRWVDFHEPEQQVIFFKRQVYIQALKELEPLLKKERRTPYGLKRKRGNQRA.

The Nudix hydrolase domain maps to Gly-7 to Lys-150. The short motif at Gly-39–Gly-60 is the Nudix box element.

The protein belongs to the Nudix hydrolase family. RppH subfamily. It depends on a divalent metal cation as a cofactor.

Functionally, accelerates the degradation of transcripts by removing pyrophosphate from the 5'-end of triphosphorylated RNA, leading to a more labile monophosphorylated state that can stimulate subsequent ribonuclease cleavage. The protein is RNA pyrophosphohydrolase of Legionella pneumophila (strain Paris).